The chain runs to 393 residues: Protein TsgA homolog (393 aa).

The next 12 helical transmembrane spans lie at 11 to 31, 51 to 71, 78 to 98, 101 to 121, 134 to 154, 162 to 182, 206 to 226, 245 to 265, 273 to 293, 297 to 317, 332 to 352, and 361 to 381; these read WISFLSYALTGALVIVTGMVM, FLNAGILISIFLNAWLMEIIP, FGFVLMVLAVAGLMLSHSLAL, AAMFVLGLVSGITMSIGTFLI, LLFTDSFFSMAGMIFPMVAAY, WYWVYACIGLVYVAIFILTFG, IGVLFLSIAALCYILGQLGFI, TLVSDFWMSYMFGMWAFSFIL, ILTVLAGLAAVLMYLFIKAQP, AWFILTLGFFSSAIYTSIITL, FVLTCGTIGTMLTFVVTGPIV, and LLTANGLYAVVFVMCFILGFV.

Belongs to the major facilitator superfamily. TsgA family.

The protein resides in the cell inner membrane. This chain is Protein TsgA homolog, found in Citrobacter koseri (strain ATCC BAA-895 / CDC 4225-83 / SGSC4696).